We begin with the raw amino-acid sequence, 157 residues long: Vitamin K-dependent protein C (157 aa).

One can recognise a Peptidase S1 domain in the interval 1–157 (ENGEVDLDIQ…GCGRLHNYGV (157 aa)). A glycan (N-linked (GlcNAc...) asparagine) is linked at N17. D26 serves as the catalytic Charge relay system. N78 carries N-linked (GlcNAc...) asparagine glycosylation. 2 cysteine pairs are disulfide-bonded: C96–C110 and C121–C149. S125 acts as the Charge relay system in catalysis.

This sequence belongs to the peptidase S1 family. In terms of tissue distribution, plasma; synthesized in the liver.

It is found in the secreted. The protein localises to the golgi apparatus. It localises to the endoplasmic reticulum. The enzyme catalyses Degradation of blood coagulation factors Va and VIIIa.. In terms of biological role, protein C is a vitamin K-dependent serine protease that regulates blood coagulation by inactivating factors Va and VIIIa in the presence of calcium ions and phospholipids. Exerts a protective effect on the endothelial cell barrier function. This Equus caballus (Horse) protein is Vitamin K-dependent protein C (PROC).